The primary structure comprises 261 residues: Indole-3-glycerol phosphate synthase (261 aa).

This sequence belongs to the TrpC family.

The enzyme catalyses 1-(2-carboxyphenylamino)-1-deoxy-D-ribulose 5-phosphate + H(+) = (1S,2R)-1-C-(indol-3-yl)glycerol 3-phosphate + CO2 + H2O. Its pathway is amino-acid biosynthesis; L-tryptophan biosynthesis; L-tryptophan from chorismate: step 4/5. In Burkholderia mallei (strain NCTC 10247), this protein is Indole-3-glycerol phosphate synthase.